We begin with the raw amino-acid sequence, 466 residues long: Citrate synthase, mitochondrial (466 aa).

The transit peptide at 1-27 (MALLTAAARLLGAKNSSCLVLAARHAS) directs the protein to the mitochondrion. The SIFI-degron signature appears at 2–21 (ALLTAAARLLGAKNSSCLVL). Residue Lys-57 is modified to N6-succinyllysine. An N6-acetyllysine; alternate modification is found at Lys-76. At Lys-76 the chain carries N6-succinyllysine; alternate. Lys-103 and Lys-193 each carry N6-succinyllysine. Phosphoserine is present on Ser-226. His-301 is a catalytic residue. 2 positions are modified to N6-acetyllysine; alternate: Lys-321 and Lys-327. N6-succinyllysine; alternate occurs at positions 321 and 327. The active site involves His-347. Arg-356 serves as a coordination point for oxaloacetate. Lys-375 carries the post-translational modification N6-acetyllysine; alternate. Lys-375 carries the N6-succinyllysine; alternate modification. N6-acetyllysine is present on Lys-382. Residue Lys-393 is modified to N6-acetyllysine; alternate. Residue Lys-393 is modified to N6-succinyllysine; alternate. Lys-395 bears the N6,N6,N6-trimethyllysine mark. Asp-402 is an active-site residue. Oxaloacetate contacts are provided by Arg-428 and Arg-448. Position 450 is an N6-succinyllysine (Lys-450). Lys-459 is subject to N6-acetyllysine; alternate. Lys-459 is subject to N6-succinyllysine; alternate.

This sequence belongs to the citrate synthase family. As to quaternary structure, homodimer. Methylated. Trimethylation at Lys-395 by CSKMT decreases citrate synthase activity. In terms of processing, in response to mitochondrial stress, the precursor protein is ubiquitinated by the SIFI complex in the cytoplasm before mitochondrial import, leading to its degradation. Within the SIFI complex, UBR4 initiates ubiquitin chain that are further elongated or branched by KCMF1. In terms of tissue distribution, expressed in the head region and flagellum of epididymal sperm.

The protein resides in the mitochondrion matrix. It catalyses the reaction oxaloacetate + acetyl-CoA + H2O = citrate + CoA + H(+). It participates in carbohydrate metabolism; tricarboxylic acid cycle; isocitrate from oxaloacetate: step 1/2. Its function is as follows. Key enzyme of the Krebs tricarboxylic acid cycle which catalyzes the synthesis of citrate from acetyl coenzyme A and oxaloacetate. The sequence is that of Citrate synthase, mitochondrial (Cs) from Rattus norvegicus (Rat).